A 216-amino-acid polypeptide reads, in one-letter code: Vascular endothelial growth factor A (216 aa).

The first 26 residues, 1–26, serve as a signal peptide directing secretion; the sequence is MNFLLTWIHWGLAALLYFHNAKVLQA. 3 cysteine pairs are disulfide-bonded: Cys52/Cys94, Cys83/Cys128, and Cys87/Cys130. Asn101 carries N-linked (GlcNAc...) asparagine glycosylation. A disordered region spans residues 140–161; the sequence is QEKKSKREKGKGQKRKRKRGRY. A compositionally biased stretch (basic residues) spans 145–161; it reads KREKGKGQKRKRKRGRY.

This sequence belongs to the PDGF/VEGF growth factor family. In terms of assembly, homodimer; disulfide-linked. Also found as heterodimer with PGF. Interacts to the FLT1/VEGFR1 and KDR/VEGFR2 receptors, heparan sulfate and heparin. As to expression, expressed in venom gland, heart, brain, liver, skeletal muscle and kidney.

It is found in the secreted. Growth factor active in angiogenesis, vasculogenesis and endothelial cell growth. Induces endothelial cell proliferation, promotes cell migration, inhibits apoptosis and induces permeabilization of blood vessels. In Protobothrops flavoviridis (Habu), this protein is Vascular endothelial growth factor A.